The sequence spans 329 residues: Serine dehydratase-like (329 aa).

Met1 bears the N-acetylmethionine mark. Position 48 is an N6-(pyridoxal phosphate)lysine (Lys48).

It belongs to the serine/threonine dehydratase family. As to quaternary structure, monomer. Homodimer. Requires pyridoxal 5'-phosphate as cofactor. Abundantly expressed in liver.

The enzyme catalyses L-serine = pyruvate + NH4(+). It carries out the reaction L-threonine = 2-oxobutanoate + NH4(+). It catalyses the reaction L-glutamate = D-glutamate. Catalyzes the pyridoxal-phosphate-dependent dehydrative deamination of L-threonine and L-serine to ammonia and alpha-ketobutyrate and pyruvate, respectively. Also exhibits racemase activity towards L-glutamate and D-glutamate. The chain is Serine dehydratase-like (Sdsl) from Mus musculus (Mouse).